A 293-amino-acid polypeptide reads, in one-letter code: Ankyrin repeat and SOCS box protein 11 (293 aa).

ANK repeat units follow at residues 36–65 (DDRT…NVGM), 69–98 (DGIT…DANA), 102–131 (DGAT…AHHP), 134–163 (LLCS…NVDM), 167–196 (SVGT…DVQC), 199–228 (GLDT…DRTS), and 232–259 (EGKT…SLSQ). The SOCS box domain occupies 244–293 (SIKHLLQTAGTCSLSQLCRWCIRRSLGQKGLNKTKTLCLPHMLHNYLLYH).

It belongs to the ankyrin SOCS box (ASB) family. In terms of assembly, substrate-recognition component of the ECS(ASB11) complex, composed of asb11, cul5, elob, eloc and rnf7/rbx2. Expressed in the developing nervous system: localizes to neural plate margins and is abutting the proneuronal zone.

It is found in the endoplasmic reticulum. It functions in the pathway protein modification; protein ubiquitination. In terms of biological role, substrate-recognition component of a cullin-5-RING E3 ubiquitin-protein ligase complex (ECS complex, also named CRL5 complex), which mediates the ubiquitination and subsequent proteasomal degradation of target proteins. Acts as a regulator of the neuronal progenitor compartment size by maintaining the neural precursors in the proliferating undifferentiated state. The ECS(ASB11) complex acts as a positive regulator of Notch signaling pathway by mediating ubiquitination and degradation of DeltaA (dla). Also acts as a regulator of regenerative myogenesis. This Danio rerio (Zebrafish) protein is Ankyrin repeat and SOCS box protein 11.